A 280-amino-acid chain; its full sequence is Fructose-1,6-bisphosphatase class 1 (280 aa).

Residues glutamate 64, aspartate 83, leucine 85, and aspartate 86 each coordinate Mg(2+). Residues 86 to 89 (DGSS), tyrosine 189, and lysine 220 contribute to the substrate site. Glutamate 226 provides a ligand contact to Mg(2+).

It belongs to the FBPase class 1 family. Homotetramer. Mg(2+) serves as cofactor.

Its subcellular location is the cytoplasm. The enzyme catalyses beta-D-fructose 1,6-bisphosphate + H2O = beta-D-fructose 6-phosphate + phosphate. The protein operates within carbohydrate biosynthesis; gluconeogenesis. The polypeptide is Fructose-1,6-bisphosphatase class 1 (Campylobacter jejuni (strain RM1221)).